We begin with the raw amino-acid sequence, 123 residues long: MSKPMYVKFEVPEELAEKAYEALEIARDTGRIRKGTNETTKAVEREEAVLVLIAEDVDPEEVVAHLPELCDEKGIPYVYVPSKDELGAAAGIDVAAASACIIDPGDAKDLVDEIIEKVEELRE.

It belongs to the eukaryotic ribosomal protein eL8 family. Part of the 50S ribosomal subunit. Probably part of the RNase P complex.

The protein resides in the cytoplasm. Its function is as follows. Multifunctional RNA-binding protein that recognizes the K-turn motif in ribosomal RNA, the RNA component of RNase P, box H/ACA, box C/D and box C'/D' sRNAs. This is Large ribosomal subunit protein eL8 from Methanopyrus kandleri (strain AV19 / DSM 6324 / JCM 9639 / NBRC 100938).